The following is a 340-amino-acid chain: Nesprin-4 (340 aa).

2 disordered regions span residues 1–86 (MAQF…DGGK) and 254–277 (HRRR…DAML). The Cytoplasmic portion of the chain corresponds to 1-291 (MAQFPLLGHG…GVPAPASRRP (291 aa)). Residues 53-63 (APEHFMDEPKS) show a composition bias toward basic and acidic residues. One can recognise a KASH domain in the interval 283–340 (VPAPASRRPLTFLLLLLFLLLVGATLLLPLSGVPCCSHTRLARTPYLVLSYVNGLPPI). A helical; Anchor for type IV membrane protein membrane pass occupies residues 292–312 (LTFLLLLLFLLLVGATLLLPL). Over 313–340 (SGVPCCSHTRLARTPYLVLSYVNGLPPI) the chain is Perinuclear space.

It belongs to the nesprin family. Core component of LINC complexes which are composed of inner nuclear membrane SUN domain-containing proteins coupled to outer nuclear membrane KASH domain-containing nesprins. SUN and KASH domain-containing proteins seem to bind each other promiscuously; however, differentially expression of LINC complex constituents can give rise to specific assemblies. Probably part of a SUN1-containing LINC complex. Interacts with kinesins KIF5B and KLC1.

It is found in the nucleus outer membrane. Functionally, as a component of the LINC (LInker of Nucleoskeleton and Cytoskeleton) complex, involved in the connection between the nuclear lamina and the cytoskeleton. The nucleocytoplasmic interactions established by the LINC complex play an important role in the transmission of mechanical forces across the nuclear envelope and in nuclear movement and positioning. Behaves as a kinesin cargo, providing a functional binding site for kinesin-1 at the nuclear envelope. Hence may contribute to the establishment of secretory epithelial morphology, by promoting kinesin-dependent apical migration of the centrosome and Golgi apparatus and basal localization of the nucleus. The sequence is that of Nesprin-4 (Syne4) from Rattus norvegicus (Rat).